We begin with the raw amino-acid sequence, 333 residues long: Fatty acid hydroxylase domain-containing protein 2 (333 aa).

6 consecutive transmembrane segments (helical) span residues 29–49 (FILG…TWHL), 77–97 (ILFF…FNGL), 134–154 (TVLF…YPFL), 168–188 (FHWF…LFYY), 215–235 (VISL…PVIV), and 237–257 (PLVM…ALII). In terms of domain architecture, Fatty acid hydroxylase spans 176–299 (AIFTLIEEVL…LGVLDHLHGT (124 aa)).

Belongs to the sterol desaturase family. In terms of tissue distribution, down-regulated in primary acute myeloid leukemia (AML) patients.

It is found in the cytoplasm. Its subcellular location is the membrane. Promotes megakaryocyte differentiation by enhancing ERK phosphorylation and up-regulating RUNX1 expression. This chain is Fatty acid hydroxylase domain-containing protein 2 (FAXDC2), found in Homo sapiens (Human).